The sequence spans 213 residues: Serine acetyltransferase (213 aa).

Belongs to the transferase hexapeptide repeat family.

The protein resides in the cytoplasm. It catalyses the reaction L-serine + acetyl-CoA = O-acetyl-L-serine + CoA. Its pathway is amino-acid biosynthesis; L-cysteine biosynthesis; L-cysteine from L-serine: step 1/2. This is Serine acetyltransferase (cysE) from Staphylococcus aureus (strain COL).